Reading from the N-terminus, the 249-residue chain is Salivary antigen-5 (249 aa).

Residues Met1–Ala26 form the signal peptide. The SCP domain maps to Ser50–Tyr193. Asn57, Asn127, and Asn168 each carry an N-linked (GlcNAc...) asparagine glycan.

It belongs to the CRISP family. Venom allergen 5-like subfamily. Monomeric in solution. Cu(2+) is required as a cofactor. In terms of tissue distribution, saliva (at protein level). Salivary gland (at protein level).

It is found in the secreted. Functionally, antioxidant protein that scavenges superoxide radicals. Removes superoxide radicals produced by PMA-stimulated host neutrophils. Inhibits host platelet aggregation induced by low doses of collagen by interfering with the pro-aggregatory properties of reactive oxygen species on platelets. Binds to heparin and sulfated glycosaminoglycans. In Dipetalogaster maximus (Blood-sucking bug), this protein is Salivary antigen-5.